The chain runs to 403 residues: Argininosuccinate synthase (403 aa).

Residues 13–21 and A40 each bind ATP; that span reads AYSGGLDTS. 2 residues coordinate L-citrulline: Y92 and S97. Residue G122 coordinates ATP. Residues T124, N128, and D129 each contribute to the L-aspartate site. N128 contacts L-citrulline. Residues R132, S181, S190, E266, and Y278 each coordinate L-citrulline.

It belongs to the argininosuccinate synthase family. Type 1 subfamily. As to quaternary structure, homotetramer.

The protein resides in the cytoplasm. It catalyses the reaction L-citrulline + L-aspartate + ATP = 2-(N(omega)-L-arginino)succinate + AMP + diphosphate + H(+). The protein operates within amino-acid biosynthesis; L-arginine biosynthesis; L-arginine from L-ornithine and carbamoyl phosphate: step 2/3. The sequence is that of Argininosuccinate synthase from Aliivibrio salmonicida (strain LFI1238) (Vibrio salmonicida (strain LFI1238)).